The following is a 31-amino-acid chain: Cytochrome b6-f complex subunit 6 (31 aa).

A helical transmembrane segment spans residues 4-26 (LTSYFGFLLAALTITSALFIGLN).

This sequence belongs to the PetL family. The 4 large subunits of the cytochrome b6-f complex are cytochrome b6, subunit IV (17 kDa polypeptide, PetD), cytochrome f and the Rieske protein, while the 4 small subunits are PetG, PetL, PetM and PetN. The complex functions as a dimer.

The protein localises to the plastid. Its subcellular location is the chloroplast thylakoid membrane. Its function is as follows. Component of the cytochrome b6-f complex, which mediates electron transfer between photosystem II (PSII) and photosystem I (PSI), cyclic electron flow around PSI, and state transitions. PetL is important for photoautotrophic growth as well as for electron transfer efficiency and stability of the cytochrome b6-f complex. This is Cytochrome b6-f complex subunit 6 from Blitum bonus-henricus (Good King Henry).